Reading from the N-terminus, the 300-residue chain is GTPase Era (300 aa).

The Era-type G domain maps to 4–172 (KSGFVALIGR…LEKIKKLLPE (169 aa)). Positions 12–19 (GRPNVGKS) are G1. 12–19 (GRPNVGKS) contacts GTP. A G2 region spans residues 38-42 (QTTRN). Residues 59 to 62 (DTPG) form a G3 region. GTP is bound by residues 59 to 63 (DTPGV) and 122 to 125 (NKAD). The G4 stretch occupies residues 122-125 (NKAD). The G5 stretch occupies residues 151 to 153 (IAA). Residues 195–281 (IREKILLNLS…NLQLWVKVKK (87 aa)) enclose the KH type-2 domain.

It belongs to the TRAFAC class TrmE-Era-EngA-EngB-Septin-like GTPase superfamily. Era GTPase family. Monomer.

The protein localises to the cytoplasm. Its subcellular location is the cell membrane. An essential GTPase that binds both GDP and GTP, with rapid nucleotide exchange. Plays a role in 16S rRNA processing and 30S ribosomal subunit biogenesis and possibly also in cell cycle regulation and energy metabolism. This Caldicellulosiruptor saccharolyticus (strain ATCC 43494 / DSM 8903 / Tp8T 6331) protein is GTPase Era.